The following is a 206-amino-acid chain: Glutathione S-transferase 1 (206 aa).

The region spanning 2-79 (PQYKLTYFDI…YLGRQFGLAG (78 aa)) is the GST N-terminal domain. Glutathione contacts are provided by residues Tyr8, Trp39, Lys43, 49 to 51 (GQL), and 63 to 64 (QS). Residues 81-206 (TPMEEAQVDS…WIAERPKTPY (126 aa)) enclose the GST C-terminal domain.

The protein belongs to the GST superfamily. Sigma family.

It carries out the reaction RX + glutathione = an S-substituted glutathione + a halide anion + H(+). Functionally, conjugation of reduced glutathione to a wide number of exogenous and endogenous hydrophobic electrophiles. Can also function as a GSH peroxidase. The polypeptide is Glutathione S-transferase 1 (GST1) (Ascaris suum (Pig roundworm)).